The primary structure comprises 170 residues: N-glycosidase R617 (170 aa).

It belongs to the YbiA family.

The enzyme catalyses 2,5-diamino-6-hydroxy-4-(5-phosphoribosylamino)-pyrimidine + H2O = 2,5,6-triamino-4-hydroxypyrimidine + D-ribose 5-phosphate. It catalyses the reaction 5-amino-6-(5-phospho-D-ribosylamino)uracil + H2O = 5,6-diaminouracil + D-ribose 5-phosphate. Its function is as follows. Catalyzes the hydrolysis of the N-glycosidic bond in the first two intermediates of riboflavin biosynthesis, which are highly reactive metabolites, yielding relatively innocuous products. Thus, can divert a surplus of harmful intermediates into relatively harmless products and pre-empt the damage these intermediates would otherwise do. May act on other substrates in vivo. This Acanthamoeba polyphaga mimivirus (APMV) protein is N-glycosidase R617.